Here is a 149-residue protein sequence, read N- to C-terminus: Flagellar assembly factor FliW (149 aa).

The protein belongs to the FliW family. Interacts with translational regulator CsrA and flagellin(s).

Its subcellular location is the cytoplasm. Functionally, acts as an anti-CsrA protein, binds CsrA and prevents it from repressing translation of its target genes, one of which is flagellin. Binds to flagellin and participates in the assembly of the flagellum. The sequence is that of Flagellar assembly factor FliW from Thermotoga sp. (strain RQ2).